Consider the following 3020-residue polypeptide: Protein furry homolog (3020 aa).

Residue Tyr-213 is modified to Phosphotyrosine. Disordered stretches follow at residues Gly-1378–Asn-1404, Ala-1529–Ile-1554, and Ser-1746–Pro-1773. Ser-1382 and Ser-1383 each carry phosphoserine. Residues Ser-1752–Leu-1772 are compositionally biased toward low complexity. Residues Ser-1936 and Ser-1940 each carry the phosphoserine modification. Residues Arg-1937 to Thr-1956 show a composition bias toward low complexity. 2 disordered regions span residues Arg-1937 to Val-2042 and Leu-2355 to Asn-2384. Residues Pro-1966–Gly-1976 show a composition bias toward gly residues. The segment covering Ala-2016–Val-2042 has biased composition (polar residues). Residues Ala-2369–Asn-2384 are compositionally biased toward low complexity. Residues Ser-2427 and Ser-2428 each carry the phosphoserine modification. A disordered region spans residues Thr-2439 to Asn-2458. Ser-2495 carries the post-translational modification Phosphoserine. The interval Glu-2508 to Leu-2535 is disordered. Thr-2516 carries the post-translational modification Phosphothreonine; by CDK1. Acidic residues predominate over residues Asp-2526 to Leu-2535. Phosphoserine is present on Ser-2815.

It belongs to the furry protein family. In terms of assembly, when phosphorylated by CDK1, interacts with PLK1; this interaction occurs in mitotic cells, but not in interphase cells, and leads to further FRY phosphorylation by PLK1. Post-translationally, phosphorylated by AURKA, CDK1 and PLK1.

It localises to the cytoplasm. Its subcellular location is the cytoskeleton. It is found in the microtubule organizing center. The protein localises to the centrosome. The protein resides in the spindle pole. In terms of biological role, plays a crucial role in the structural integrity of mitotic centrosomes and in the maintenance of spindle bipolarity by promoting PLK1 activity at the spindle poles in early mitosis. May function as a scaffold promoting the interaction between AURKA and PLK1, thereby enhancing AURKA-mediated PLK1 phosphorylation. The protein is Protein furry homolog (Fry) of Mus musculus (Mouse).